Consider the following 85-residue polypeptide: Putative membrane protein insertion efficiency factor (85 aa).

This sequence belongs to the UPF0161 family.

The protein resides in the cell inner membrane. Its function is as follows. Could be involved in insertion of integral membrane proteins into the membrane. The sequence is that of Putative membrane protein insertion efficiency factor from Enterobacter sp. (strain 638).